We begin with the raw amino-acid sequence, 140 residues long: Small ribosomal subunit protein uS11c (140 aa).

Belongs to the universal ribosomal protein uS11 family. Part of the 30S ribosomal subunit.

The protein localises to the plastid. It localises to the chloroplast. This is Small ribosomal subunit protein uS11c from Pelargonium hortorum (Common geranium).